The chain runs to 98 residues: Small ribosomal subunit protein bTHXm (98 aa).

The N-terminal 35 residues, 1–35, are a transit peptide targeting the mitochondrion; the sequence is MAAMQWCGAMTRRIMMTQRTSAALNCSARYSSLSP. Positions 52 to 71 are disordered; that stretch reads DKKTKKGKRFKGSYGNSRGK. Basic residues predominate over residues 53 to 62; the sequence is KKTKKGKRFK.

Belongs to the bacterial ribosomal protein bTHX family. Component of the mitochondrial ribosome small subunit.

The protein resides in the mitochondrion. This is Small ribosomal subunit protein bTHXm from Arabidopsis thaliana (Mouse-ear cress).